The primary structure comprises 113 residues: Large ribosomal subunit protein eL31A (113 aa).

This sequence belongs to the eukaryotic ribosomal protein eL31 family. Component of the large ribosomal subunit (LSU). Mature yeast ribosomes consist of a small (40S) and a large (60S) subunit. The 40S small subunit contains 1 molecule of ribosomal RNA (18S rRNA) and 33 different proteins (encoded by 57 genes). The large 60S subunit contains 3 rRNA molecules (25S, 5.8S and 5S rRNA) and 46 different proteins (encoded by 81 genes).

It is found in the cytoplasm. Its function is as follows. Component of the ribosome, a large ribonucleoprotein complex responsible for the synthesis of proteins in the cell. The small ribosomal subunit (SSU) binds messenger RNAs (mRNAs) and translates the encoded message by selecting cognate aminoacyl-transfer RNA (tRNA) molecules. The large subunit (LSU) contains the ribosomal catalytic site termed the peptidyl transferase center (PTC), which catalyzes the formation of peptide bonds, thereby polymerizing the amino acids delivered by tRNAs into a polypeptide chain. The nascent polypeptides leave the ribosome through a tunnel in the LSU and interact with protein factors that function in enzymatic processing, targeting, and the membrane insertion of nascent chains at the exit of the ribosomal tunnel. The protein is Large ribosomal subunit protein eL31A of Saccharomyces cerevisiae (strain ATCC 204508 / S288c) (Baker's yeast).